The primary structure comprises 490 residues: MMSARSVSPKVLLDISYKPTLPNIMELQNNVIKLIQVEQQAYMQSGYQLQHQQQHLHSHQHHQQHQQQQQQHTQYAPLPSEYAAYGITELEDTDYNIPSNEVLSTSSNQSAQSTSLEMNNNNTSSNNTSSGNNPSGFDGQASSGSSWNEHGKRARSSGDYDCQTGGSLVMQPEHKKLIHQQQQQPQQQQQHQQHIYVDYLPTTVDEVAAAQSCPGVQSTCTSPQSHFDFPDEELPEHKAQVFLPLYNNQQQSQQQPHQQNHAQMHFQNAYRQSFESYEPANSLNGSAYSSSDRDDMEYARHNALSSVSDLNGGVMSPACLADDGSAGSLLDGSDAGGKAFRKPRRRLKRKPSKTEETDEFSNQRVMANVRERQRTQSLNDAFKSLQQIIPTLPSDKLSKIQTLKLATRYIDFLCRMLSSSDISLLKALEAQGSPSAYGSASSLLSAAANGAEADLKCLRKANGAPIIPPEKLSYLFGVWRMEGDAQHQKA.

3 disordered regions span residues 48 to 74, 98 to 167, and 330 to 359; these read QLQH…QHTQ, PSNE…TGGS, and LDGS…ETDE. Basic residues predominate over residues 54–64; the sequence is QHLHSHQHHQQ. Low complexity-rich tracts occupy residues 65 to 74 and 104 to 135; these read HQQQQQQHTQ and STSS…NNPS. Positions 339–351 are enriched in basic residues; sequence AFRKPRRRLKRKP. The region spanning 362-413 is the bHLH domain; that stretch reads NQRVMANVRERQRTQSLNDAFKSLQQIIPTLPSDKLSKIQTLKLATRYIDFL.

As to quaternary structure, efficient DNA binding requires dimerization with another bHLH protein. Homodimer.

It localises to the nucleus. Functionally, involved in the establishment and dorsoventral patterning of germ layers in the embryo. The sequence is that of Protein twist from Drosophila erecta (Fruit fly).